The chain runs to 2233 residues: Acetyl-CoA carboxylase (2233 aa).

The residue at position 2 (Ser2) is an N-acetylserine. Ser2 carries the post-translational modification Phosphoserine. The Biotin carboxylation domain maps to 58-567; that stretch reads VISKILIANN…TTGWLDDLIT (510 aa). Residues 216–408 form the ATP-grasp domain; sequence KTGLVSVDDD…LPAAQLQIAM (193 aa). Position 256 to 261 (256 to 261) interacts with ATP; the sequence is GGGGKG. Residues Glu365, Glu379, and Asn381 each contribute to the Mn(2+) site. Residue Arg383 is part of the active site. Residues 694 to 768 form the Biotinyl-binding domain; it reads LEVENDPTQL…VAGDIMAIMT (75 aa). Position 735 is an N6-biotinyllysine (Lys735). A phosphoserine mark is found at Ser790, Ser1148, Ser1157, and Ser1162. One can recognise a CoA carboxyltransferase N-terminal domain in the interval 1486 to 1822; sequence PYPVKEWLQP…KRNMPVPILE (337 aa). Residues 1486–2141 are carboxyltransferase; sequence PYPVKEWLQP…EEYLIKRLSH (656 aa). 1627 to 1629 serves as a coordination point for acetyl-CoA; the sequence is ARI. Arg1731 lines the CoA pocket. Positions 1826 to 2141 constitute a CoA carboxyltransferase C-terminal domain; it reads TWDRPVDFTP…EEYLIKRLSH (316 aa). Gly1998 serves as a coordination point for acetyl-CoA. Residues Lys2034 and Arg2036 each contribute to the CoA site.

Homodimer. The cofactor is biotin. Requires Mn(2+) as cofactor.

The protein localises to the cytoplasm. It is found in the endoplasmic reticulum membrane. It carries out the reaction hydrogencarbonate + acetyl-CoA + ATP = malonyl-CoA + ADP + phosphate + H(+). It catalyses the reaction N(6)-biotinyl-L-lysyl-[protein] + hydrogencarbonate + ATP = N(6)-carboxybiotinyl-L-lysyl-[protein] + ADP + phosphate + H(+). It participates in lipid metabolism; malonyl-CoA biosynthesis; malonyl-CoA from acetyl-CoA: step 1/1. With respect to regulation, by phosphorylation. The catalytic activity is inhibited by soraphen A, a polyketide isolated from the myxobacterium Sorangium cellulosum and a potent inhibitor of fungal growth. Its function is as follows. Carries out three functions: biotin carboxyl carrier protein, biotin carboxylase and carboxyltransferase. Involved in the synthesis of very-long-chain fatty acid synthesis which is required to maintain a functional nuclear envelope. Required for acylation and vacuolar membrane association of VAC8 which is necessary to maintain a normal morphology of the vacuole. This chain is Acetyl-CoA carboxylase (ACC1), found in Saccharomyces cerevisiae (strain ATCC 204508 / S288c) (Baker's yeast).